Consider the following 359-residue polypeptide: Peptide chain release factor 1 (359 aa).

Gln236 carries the post-translational modification N5-methylglutamine.

This sequence belongs to the prokaryotic/mitochondrial release factor family. Methylated by PrmC. Methylation increases the termination efficiency of RF1.

Its subcellular location is the cytoplasm. In terms of biological role, peptide chain release factor 1 directs the termination of translation in response to the peptide chain termination codons UAG and UAA. The protein is Peptide chain release factor 1 (prfA) of Mycoplasma pneumoniae (strain ATCC 29342 / M129 / Subtype 1) (Mycoplasmoides pneumoniae).